Consider the following 431-residue polypeptide: Na(+)-translocating NADH-quinone reductase subunit F (431 aa).

Residues 10-30 form a helical membrane-spanning segment; sequence ISIASLVFCVIGLILSGIILI. Residues 41-133 form the 2Fe-2S ferredoxin-type domain; it reads CKLKINDDDS…DMCLEIEERY (93 aa). [2Fe-2S] cluster is bound by residues Cys76, Cys82, Cys85, and Cys117. An FAD-binding FR-type domain is found at 136-286; that stretch reads ASSWEGTVVS…SGPYGESFMK (151 aa).

This sequence belongs to the NqrF family. In terms of assembly, composed of six subunits; NqrA, NqrB, NqrC, NqrD, NqrE and NqrF. [2Fe-2S] cluster serves as cofactor. It depends on FAD as a cofactor.

Its subcellular location is the cell inner membrane. It carries out the reaction a ubiquinone + n Na(+)(in) + NADH + H(+) = a ubiquinol + n Na(+)(out) + NAD(+). Functionally, NQR complex catalyzes the reduction of ubiquinone-1 to ubiquinol by two successive reactions, coupled with the transport of Na(+) ions from the cytoplasm to the periplasm. The first step is catalyzed by NqrF, which accepts electrons from NADH and reduces ubiquinone-1 to ubisemiquinone by a one-electron transfer pathway. The protein is Na(+)-translocating NADH-quinone reductase subunit F of Chlamydia caviae (strain ATCC VR-813 / DSM 19441 / 03DC25 / GPIC) (Chlamydophila caviae).